Consider the following 90-residue polypeptide: Alpha-latrotoxin associated low molecular weight protein (90 aa).

The first 18 residues, 1–18, serve as a signal peptide directing secretion; the sequence is MNKLFFVVFLCLIISVLA.

The protein belongs to the arthropod CHH/MIH/GIH/VIH hormone family. In terms of tissue distribution, expressed by the venom gland.

Its subcellular location is the secreted. Functionally, may increase the toxicity of alpha-latrotoxin and/or other venom components. Is non-toxic to mice and to the cockroach Periplaneta americana. In Latrodectus geometricus (Brown widow spider), this protein is Alpha-latrotoxin associated low molecular weight protein.